Here is an 88-residue protein sequence, read N- to C-terminus: Large ribosomal subunit protein bL27 (88 aa).

A compositionally biased stretch (low complexity) spans 1–13; that stretch reads MATKKSGGSSSNG. The disordered stretch occupies residues 1–24; sequence MATKKSGGSSSNGRDSRGRRLGVK.

This sequence belongs to the bacterial ribosomal protein bL27 family.

This is Large ribosomal subunit protein bL27 from Ehrlichia ruminantium (strain Gardel).